The sequence spans 560 residues: Glutamate--tRNA ligase, chloroplastic/mitochondrial (560 aa).

47 to 49 is an L-glutamate binding site; the sequence is RFA. The 'HIGH' region motif lies at 50–60; sequence PSPTGNLHVGG. Residue His57 participates in ATP binding. L-glutamate-binding positions include Glu83, 235 to 239, and Arg253; that span reads YNFCV. Residues Glu256 and 291–295 contribute to the ATP site; that span reads KLSKR. Residues 291 to 295 carry the 'KMSKS' region motif; sequence KLSKR.

The protein belongs to the class-I aminoacyl-tRNA synthetase family. Glutamate--tRNA ligase type 1 subfamily.

It is found in the plastid. The protein resides in the chloroplast. It localises to the mitochondrion. The enzyme catalyses tRNA(Glu) + L-glutamate + ATP = L-glutamyl-tRNA(Glu) + AMP + diphosphate. Catalyzes the attachment of glutamate to tRNA(Glu) in a two-step reaction: glutamate is first activated by ATP to form Glu-AMP and then transferred to the acceptor end of tRNA(Glu). This chain is Glutamate--tRNA ligase, chloroplastic/mitochondrial, found in Hordeum vulgare (Barley).